The chain runs to 220 residues: Lactate utilization protein C (220 aa).

It belongs to the LutC/YkgG family.

In terms of biological role, is involved in L-lactate degradation and allows cells to grow with lactate as the sole carbon source. This Anoxybacillus flavithermus (strain DSM 21510 / WK1) protein is Lactate utilization protein C.